The chain runs to 848 residues: DNA-binding protein RFX6 (848 aa).

Positions Thr-56–Glu-131 form a DNA-binding region, RFX-type winged-helix.

The protein belongs to the RFX family. In terms of tissue distribution, expressed in progenitors and hormone expressing cells of the islet lineage.

It localises to the nucleus. Functionally, transcription factor required to direct islet cell differentiation during endocrine pancreas development. In Danio rerio (Zebrafish), this protein is DNA-binding protein RFX6 (rfx6).